The primary structure comprises 275 residues: 3-methyl-2-oxobutanoate hydroxymethyltransferase (275 aa).

2 residues coordinate Mg(2+): Asp44 and Asp83. 3-methyl-2-oxobutanoate-binding positions include 44–45, Asp83, and Lys113; that span reads DS. Position 115 (Glu115) interacts with Mg(2+). The active-site Proton acceptor is Glu182.

The protein belongs to the PanB family. As to quaternary structure, homodecamer; pentamer of dimers. Requires Mg(2+) as cofactor.

It localises to the cytoplasm. It catalyses the reaction 3-methyl-2-oxobutanoate + (6R)-5,10-methylene-5,6,7,8-tetrahydrofolate + H2O = 2-dehydropantoate + (6S)-5,6,7,8-tetrahydrofolate. It participates in cofactor biosynthesis; (R)-pantothenate biosynthesis; (R)-pantoate from 3-methyl-2-oxobutanoate: step 1/2. Its function is as follows. Catalyzes the reversible reaction in which hydroxymethyl group from 5,10-methylenetetrahydrofolate is transferred onto alpha-ketoisovalerate to form ketopantoate. The protein is 3-methyl-2-oxobutanoate hydroxymethyltransferase of Clostridium botulinum (strain 657 / Type Ba4).